A 414-amino-acid polypeptide reads, in one-letter code: uncharacterized protein (414 aa).

The N-terminal stretch at 1–20 is a signal peptide; it reads MKKLLAIGILCIMVTAVMSG. Cysteine 21 carries the S-archaeol cysteine lipid modification. In terms of domain architecture, Fe/B12 periplasmic-binding spans 119–389; the sequence is RVIVMSSTEI…DLATILHPEA (271 aa).

It localises to the cell membrane. This is an uncharacterized protein from Methanocaldococcus jannaschii (strain ATCC 43067 / DSM 2661 / JAL-1 / JCM 10045 / NBRC 100440) (Methanococcus jannaschii).